The chain runs to 351 residues: Muscleblind-like protein 2a (351 aa).

C3H1-type zinc fingers lie at residues 13–41, 47–73, 177–205, and 213–239; these read WLTL…HPPK, NGRV…HPPA, TDKL…HPSD, and DNTV…HPPA.

This sequence belongs to the muscleblind family. As to expression, expressed in fast and slow myotomal muscle, heart, liver, skin, brain and testis.

Its subcellular location is the nucleus. The protein localises to the cytoplasm. Its function is as follows. Involved in pre-mRNA alternative splicing regulation. RNA-binding protein that binds to 5'ACACCC-3' core sequence. The protein is Muscleblind-like protein 2a (mbnl2a) of Takifugu rubripes (Japanese pufferfish).